The sequence spans 157 residues: XylDLEGF operon transcriptional activator 2 (157 aa).

In terms of domain architecture, HTH araC/xylS-type spans 39-140 (ERVVQFIEEN…GELPSDTLSL (102 aa)). 2 DNA-binding regions (H-T-H motif) span residues 56-77 (EQLAELALMSPRSLYTMFEKHT) and 107-130 (ITEVALDYGFLHLGRFAEKYRSTF).

It is found in the cytoplasm. Its function is as follows. Regulatory protein of the TOL plasmid xyl operons. XylS activates the xylXYZLTEGFJQKIH operon required for the degradation of toluene, m-xylene and p-xylene. The sequence is that of XylDLEGF operon transcriptional activator 2 (xylS2) from Pseudomonas putida (Arthrobacter siderocapsulatus).